The primary structure comprises 189 residues: Ribonuclease M5 2 (189 aa).

Residues 8 to 91 (SQVIVAEGRD…VFLKRDEAVP (84 aa)) form the Toprim domain. Glutamate 14, aspartate 60, and aspartate 62 together coordinate Mg(2+).

It belongs to the ribonuclease M5 family. The cofactor is Mg(2+).

It is found in the cytoplasm. It carries out the reaction Endonucleolytic cleavage of RNA, removing 21 and 42 nucleotides, respectively, from the 5'- and 3'-termini of a 5S-rRNA precursor.. Its function is as follows. Required for correct processing of both the 5' and 3' ends of 5S rRNA precursor. Cleaves both sides of a double-stranded region yielding mature 5S rRNA in one step. This is Ribonuclease M5 2 from Ligilactobacillus salivarius (strain UCC118) (Lactobacillus salivarius).